A 494-amino-acid chain; its full sequence is MTATAPVKTEYEAVIGLETHVQLGTATKIFSNASTEFGADPNTHIDPVVLGLPGTLPVLNQKVLEYAVKAGLALNCQIAPYSKFDRKQYFYPDLPKNYQISQYDLPIAEHGWIEIEVAEKGKEPYTKKIGVTRLHMEEDAGKLVHAGSDRLAGSTHSLVDYNRAGVALAEIVSEPDLRTGKEAAEYAQELRRIMRYLGVSDGNMAEGSLRCDVNISIRPKGTEKFGTKVEIKNMNSFNAIQRAIEFEIERQIRCLETGEPIVQETRLWDEGKQVTKSMRSKEGSSDYRYFPEPDLGPIEVSETQRETWRSELPELPAQKRHRYAEQYGLSAYDARVLTDEKSTADYYEATVAAGADAKQAANWLMGDIAAYVNANKLLVSDLPLQPQDLAELVNLIEAGTISGKIAKEILPELLEKGGSPKAIVEAKGLTQISDPAQIEALVDELLAAHPTELEQFRAGKTKLQGFFVGQLMKKTGGRVDPKLSNQILNQKLKG.

The protein belongs to the GatB/GatE family. GatB subfamily. Heterotrimer of A, B and C subunits.

It catalyses the reaction L-glutamyl-tRNA(Gln) + L-glutamine + ATP + H2O = L-glutaminyl-tRNA(Gln) + L-glutamate + ADP + phosphate + H(+). It carries out the reaction L-aspartyl-tRNA(Asn) + L-glutamine + ATP + H2O = L-asparaginyl-tRNA(Asn) + L-glutamate + ADP + phosphate + 2 H(+). Its function is as follows. Allows the formation of correctly charged Asn-tRNA(Asn) or Gln-tRNA(Gln) through the transamidation of misacylated Asp-tRNA(Asn) or Glu-tRNA(Gln) in organisms which lack either or both of asparaginyl-tRNA or glutaminyl-tRNA synthetases. The reaction takes place in the presence of glutamine and ATP through an activated phospho-Asp-tRNA(Asn) or phospho-Glu-tRNA(Gln). The sequence is that of Aspartyl/glutamyl-tRNA(Asn/Gln) amidotransferase subunit B from Synechococcus elongatus (strain ATCC 33912 / PCC 7942 / FACHB-805) (Anacystis nidulans R2).